We begin with the raw amino-acid sequence, 558 residues long: Oxygen-dependent choline dehydrogenase (558 aa).

Position 8 to 37 (8 to 37 (DYIIIGAGSAGNVLATRLTEDSDVSVLLLE)) interacts with FAD. His-475 serves as the catalytic Proton acceptor.

This sequence belongs to the GMC oxidoreductase family. FAD serves as cofactor.

It catalyses the reaction choline + A = betaine aldehyde + AH2. The catalysed reaction is betaine aldehyde + NAD(+) + H2O = glycine betaine + NADH + 2 H(+). It functions in the pathway amine and polyamine biosynthesis; betaine biosynthesis via choline pathway; betaine aldehyde from choline (cytochrome c reductase route): step 1/1. Functionally, involved in the biosynthesis of the osmoprotectant glycine betaine. Catalyzes the oxidation of choline to betaine aldehyde and betaine aldehyde to glycine betaine at the same rate. The chain is Oxygen-dependent choline dehydrogenase from Chromohalobacter salexigens (strain ATCC BAA-138 / DSM 3043 / CIP 106854 / NCIMB 13768 / 1H11).